A 164-amino-acid polypeptide reads, in one-letter code: Protein-export protein SecB (164 aa).

The protein belongs to the SecB family. Homotetramer, a dimer of dimers. One homotetramer interacts with 1 SecA dimer.

It localises to the cytoplasm. In terms of biological role, one of the proteins required for the normal export of preproteins out of the cell cytoplasm. It is a molecular chaperone that binds to a subset of precursor proteins, maintaining them in a translocation-competent state. It also specifically binds to its receptor SecA. This chain is Protein-export protein SecB, found in Shewanella denitrificans (strain OS217 / ATCC BAA-1090 / DSM 15013).